Consider the following 749-residue polypeptide: Probable galactinol--sucrose galactosyltransferase 6 (749 aa).

This sequence belongs to the glycosyl hydrolases 36 family.

The enzyme catalyses alpha-D-galactosyl-(1-&gt;3)-1D-myo-inositol + sucrose = raffinose + myo-inositol. In terms of biological role, transglycosidase operating by a ping-pong reaction mechanism. Involved in the synthesis of raffinose, a major soluble carbohydrate in seeds, roots and tubers. This chain is Probable galactinol--sucrose galactosyltransferase 6 (RFS6), found in Arabidopsis thaliana (Mouse-ear cress).